Here is a 222-residue protein sequence, read N- to C-terminus: Large ribosomal subunit protein uL1 (222 aa).

It belongs to the universal ribosomal protein uL1 family. As to quaternary structure, part of the 50S ribosomal subunit.

Binds directly to 23S rRNA. Probably involved in E site tRNA release. In terms of biological role, protein L1 is also a translational repressor protein, it controls the translation of its operon by binding to its mRNA. In Pyrobaculum islandicum (strain DSM 4184 / JCM 9189 / GEO3), this protein is Large ribosomal subunit protein uL1.